We begin with the raw amino-acid sequence, 194 residues long: dITP/XTP pyrophosphatase (194 aa).

8 to 13 (TGNPGK) contributes to the substrate binding site. Glutamate 38 and aspartate 67 together coordinate Mg(2+). The Proton acceptor role is filled by aspartate 67. Residues serine 68, 146 to 149 (FGYD), lysine 169, and 174 to 175 (HR) contribute to the substrate site.

It belongs to the HAM1 NTPase family. In terms of assembly, homodimer. Requires Mg(2+) as cofactor.

The catalysed reaction is XTP + H2O = XMP + diphosphate + H(+). The enzyme catalyses dITP + H2O = dIMP + diphosphate + H(+). It catalyses the reaction ITP + H2O = IMP + diphosphate + H(+). In terms of biological role, pyrophosphatase that catalyzes the hydrolysis of nucleoside triphosphates to their monophosphate derivatives, with a high preference for the non-canonical purine nucleotides XTP (xanthosine triphosphate), dITP (deoxyinosine triphosphate) and ITP. Seems to function as a house-cleaning enzyme that removes non-canonical purine nucleotides from the nucleotide pool, thus preventing their incorporation into DNA/RNA and avoiding chromosomal lesions. The protein is dITP/XTP pyrophosphatase of Synechocystis sp. (strain ATCC 27184 / PCC 6803 / Kazusa).